Consider the following 223-residue polypeptide: Large ribosomal subunit protein uL4 (223 aa).

The segment at 49 to 106 is disordered; it reads AAARQGTHSTKTRGEVSGGGRKPYRQKGTGRARQGSTRAPQFTGGGVVHGPKPRDYSQ.

This sequence belongs to the universal ribosomal protein uL4 family. In terms of assembly, part of the 50S ribosomal subunit.

Its function is as follows. One of the primary rRNA binding proteins, this protein initially binds near the 5'-end of the 23S rRNA. It is important during the early stages of 50S assembly. It makes multiple contacts with different domains of the 23S rRNA in the assembled 50S subunit and ribosome. Forms part of the polypeptide exit tunnel. The polypeptide is Large ribosomal subunit protein uL4 (Mycobacterium bovis (strain ATCC BAA-935 / AF2122/97)).